The chain runs to 333 residues: Succinylglutamate desuccinylase (333 aa).

Zn(2+)-binding residues include H56, E59, and H149. The active site involves E214.

It belongs to the AspA/AstE family. Succinylglutamate desuccinylase subfamily. The cofactor is Zn(2+).

The enzyme catalyses N-succinyl-L-glutamate + H2O = L-glutamate + succinate. Its pathway is amino-acid degradation; L-arginine degradation via AST pathway; L-glutamate and succinate from L-arginine: step 5/5. In terms of biological role, transforms N(2)-succinylglutamate into succinate and glutamate. The polypeptide is Succinylglutamate desuccinylase (Chromobacterium violaceum (strain ATCC 12472 / DSM 30191 / JCM 1249 / CCUG 213 / NBRC 12614 / NCIMB 9131 / NCTC 9757 / MK)).